Consider the following 209-residue polypeptide: Large ribosomal subunit protein bL25 (209 aa).

Disordered regions lie at residues 1 to 20 and 190 to 209; these read MSKS…KGSS and LDVS…TQTS. Positions 8-20 are enriched in basic and acidic residues; the sequence is KAEKRERVGKGSS. Acidic residues predominate over residues 192 to 209; sequence VSDETSEQEKDEGETQTS.

The protein belongs to the bacterial ribosomal protein bL25 family. CTC subfamily. Part of the 50S ribosomal subunit; part of the 5S rRNA/L5/L18/L25 subcomplex. Contacts the 5S rRNA. Binds to the 5S rRNA independently of L5 and L18.

Functionally, this is one of the proteins that binds to the 5S RNA in the ribosome where it forms part of the central protuberance. The chain is Large ribosomal subunit protein bL25 from Bartonella tribocorum (strain CIP 105476 / IBS 506).